We begin with the raw amino-acid sequence, 258 residues long: Heat-labile enterotoxin A chain (258 aa).

Residues 1-18 (MKNITFIFFILLASPLYA) form the signal peptide. Residue 25–39 (RADSRPPDEIKRSGG) participates in NAD(+) binding. The active site involves E130. An intrachain disulfide couples C205 to C217.

This sequence belongs to the enterotoxin A family. In terms of assembly, heterohexamer of one A chain and of five B chains.

Functionally, the biological activity of the toxin is produced by the A chain, which activates intracellular adenyl cyclase. The protein is Heat-labile enterotoxin A chain (eltA) of Escherichia coli.